The primary structure comprises 96 residues: Co-chaperonin GroES (96 aa).

This sequence belongs to the GroES chaperonin family. In terms of assembly, heptamer of 7 subunits arranged in a ring. Interacts with the chaperonin GroEL.

It localises to the cytoplasm. Together with the chaperonin GroEL, plays an essential role in assisting protein folding. The GroEL-GroES system forms a nano-cage that allows encapsulation of the non-native substrate proteins and provides a physical environment optimized to promote and accelerate protein folding. GroES binds to the apical surface of the GroEL ring, thereby capping the opening of the GroEL channel. This chain is Co-chaperonin GroES, found in Trichlorobacter lovleyi (strain ATCC BAA-1151 / DSM 17278 / SZ) (Geobacter lovleyi).